We begin with the raw amino-acid sequence, 254 residues long: Triosephosphate isomerase (254 aa).

9–11 is a binding site for substrate; that stretch reads NWK. H96 functions as the Electrophile in the catalytic mechanism. The active-site Proton acceptor is the E169. Substrate-binding positions include G175, S215, and 236 to 237; that span reads GG.

Belongs to the triosephosphate isomerase family. Homodimer.

Its subcellular location is the cytoplasm. The enzyme catalyses D-glyceraldehyde 3-phosphate = dihydroxyacetone phosphate. Its pathway is carbohydrate biosynthesis; gluconeogenesis. It participates in carbohydrate degradation; glycolysis; D-glyceraldehyde 3-phosphate from glycerone phosphate: step 1/1. Its function is as follows. Involved in the gluconeogenesis. Catalyzes stereospecifically the conversion of dihydroxyacetone phosphate (DHAP) to D-glyceraldehyde-3-phosphate (G3P). The chain is Triosephosphate isomerase from Borrelia recurrentis (strain A1).